A 490-amino-acid chain; its full sequence is Histone-lysine N-methyltransferase SMYD1 (490 aa).

The region spanning 7–253 is the SET domain; that stretch reads ENVEVFTAEG…EGEELTVSYI (247 aa). Residue 17-19 coordinates S-adenosyl-L-methionine; that stretch reads KGR. The Zn(2+) site is built by C52, C55, C65, C68, C74, C78, H86, and C90. The segment at 52-90 adopts an MYND-type zinc-finger fold; that stretch reads CHTCFKRQEKLHRCGQCKFAHYCDRTCQKDAWLNHKNEC. S-adenosyl-L-methionine-binding positions include H135 and 205-206; that span reads NH. Position 208 (C208) interacts with Zn(2+). 270 to 272 is a binding site for S-adenosyl-L-methionine; it reads YYF. Zn(2+) is bound by residues C274, C276, and C279.

It belongs to the class V-like SAM-binding methyltransferase superfamily. Interacts with HDAC1, HDAC2 and HDAC3. Interacts (via MYND-type zinc finger) with NACA isoform skNAC. Expression seems mostly restricted to heart and skeletal muscle.

Its subcellular location is the cytoplasm. The protein resides in the nucleus. The enzyme catalyses L-lysyl(4)-[histone H3] + 3 S-adenosyl-L-methionine = N(6),N(6),N(6)-trimethyl-L-lysyl(4)-[histone H3] + 3 S-adenosyl-L-homocysteine + 3 H(+). Its function is as follows. Methylates histone H3 at 'Lys-4' (H3K4me), seems able to perform both mono-, di-, and trimethylation. Acts as a transcriptional repressor. Essential for cardiomyocyte differentiation and cardiac morphogenesis. This Homo sapiens (Human) protein is Histone-lysine N-methyltransferase SMYD1 (SMYD1).